The chain runs to 316 residues: Ester hydrolase C11orf54 homolog (316 aa).

Residues His-267, His-269, and His-279 each contribute to the Zn(2+) site.

As to quaternary structure, monomer. Zn(2+) serves as cofactor.

It localises to the nucleus. It is found in the cytoplasm. Exhibits ester hydrolase activity on the substrate p-nitrophenyl acetate, in vitro. May regulate DNA damage and repair by regulating HIF1A degradation via chaperone-mediated autophagy (CMA). This chain is Ester hydrolase C11orf54 homolog, found in Xenopus laevis (African clawed frog).